We begin with the raw amino-acid sequence, 503 residues long: Cytochrome P450 7A1 (503 aa).

A helical transmembrane segment spans residues 4–24 (ISLIWGIAVLVSCCIWFIVGI). A heme-binding site is contributed by Cys444.

Belongs to the cytochrome P450 family. Requires heme as cofactor. Detected in liver (at protein level). Liver.

Its subcellular location is the endoplasmic reticulum membrane. The protein resides in the microsome membrane. The enzyme catalyses cholesterol + reduced [NADPH--hemoprotein reductase] + O2 = 7alpha-hydroxycholesterol + oxidized [NADPH--hemoprotein reductase] + H2O + H(+). It catalyses the reaction 4beta-hydroxycholesterol + reduced [NADPH--hemoprotein reductase] + O2 = 4beta,7alpha-dihydroxycholesterol + oxidized [NADPH--hemoprotein reductase] + H2O + H(+). The catalysed reaction is lathosterol + reduced [NADPH--hemoprotein reductase] + O2 = 7alpha,8alpha-epoxy-5alpha-cholestan-3beta-ol + oxidized [NADPH--hemoprotein reductase] + H2O + H(+). It carries out the reaction lathosterol + reduced [NADPH--hemoprotein reductase] + O2 = 5alpha-cholestan-7-oxo-3beta-ol + oxidized [NADPH--hemoprotein reductase] + H2O + H(+). The enzyme catalyses 7-dehydrocholesterol + reduced [NADPH--hemoprotein reductase] + O2 = 7-oxocholesterol + oxidized [NADPH--hemoprotein reductase] + H2O + H(+). It catalyses the reaction (24S)-hydroxycholesterol + reduced [NADPH--hemoprotein reductase] + O2 = (24S)-7alpha-dihydroxycholesterol + oxidized [NADPH--hemoprotein reductase] + H2O + H(+). The catalysed reaction is (24R)-hydroxycholesterol + reduced [NADPH--hemoprotein reductase] + O2 = (24R)-7alpha-dihydroxycholesterol + oxidized [NADPH--hemoprotein reductase] + H2O + H(+). It functions in the pathway lipid metabolism; bile acid biosynthesis. Its pathway is steroid metabolism; cholesterol degradation. In terms of biological role, a cytochrome P450 monooxygenase involved in the metabolism of endogenous cholesterol and its oxygenated derivatives (oxysterols). Mechanistically, uses molecular oxygen inserting one oxygen atom into a substrate, and reducing the second into a water molecule, with two electrons provided by NADPH via cytochrome P450 reductase (CPR; NADPH-ferrihemoprotein reductase). Functions as a critical regulatory enzyme of bile acid biosynthesis and cholesterol homeostasis. Catalyzes the hydroxylation of carbon hydrogen bond at 7-alpha position of cholesterol, a rate-limiting step in cholesterol catabolism and bile acid biosynthesis. 7-alpha hydroxylates several oxysterols, including 4beta-hydroxycholesterol and 24-hydroxycholesterol. Catalyzes the oxidation of the 7,8 double bond of 7-dehydrocholesterol and lathosterol with direct and predominant formation of the 7-keto derivatives. This is Cytochrome P450 7A1 (Cyp7a1) from Rattus norvegicus (Rat).